The primary structure comprises 310 residues: MGGNQTSITEFLLLGFPIGPRIQMLLFGLFSLFYIFILLGNGTILGLISLDSRLHTPMYFFLSHLAVVDIACACSTVPQMLVNLLHPAKPISFAGCMTQMFLFLSFAHTECLLLVVMSYDRYVAICHPLRYSTIMTWKVCITLALTSWILGVLLALVHLVLLLPLSFCGPQKLNHFFCEIMAVLKLACADTHINEVMVLAGAVSVLVGAFFSTVISYVHILCAILKIQSGEGCQKAFSICSSHLCVVGLFYGTAIIMYVEPQYESPKEQKKYLLLFHSLFNPMLNPLIYSLRNKEVQGTLKRMLEKKRTS.

Over 1 to 24 the chain is Extracellular; it reads MGGNQTSITEFLLLGFPIGPRIQM. N-linked (GlcNAc...) asparagine glycosylation is present at asparagine 4. Residues 25–48 traverse the membrane as a helical segment; it reads LLFGLFSLFYIFILLGNGTILGLI. The Cytoplasmic portion of the chain corresponds to 49–56; that stretch reads SLDSRLHT. A helical membrane pass occupies residues 57–78; that stretch reads PMYFFLSHLAVVDIACACSTVP. Residues 79–99 lie on the Extracellular side of the membrane; it reads QMLVNLLHPAKPISFAGCMTQ. Cysteine 96 and cysteine 188 form a disulfide bridge. The chain crosses the membrane as a helical span at residues 100–119; that stretch reads MFLFLSFAHTECLLLVVMSY. The Cytoplasmic segment spans residues 120–138; that stretch reads DRYVAICHPLRYSTIMTWK. The helical transmembrane segment at 139 to 157 threads the bilayer; that stretch reads VCITLALTSWILGVLLALV. The Extracellular segment spans residues 158–195; that stretch reads HLVLLLPLSFCGPQKLNHFFCEIMAVLKLACADTHINE. The chain crosses the membrane as a helical span at residues 196–218; sequence VMVLAGAVSVLVGAFFSTVISYV. Residues 219–235 are Cytoplasmic-facing; sequence HILCAILKIQSGEGCQK. The chain crosses the membrane as a helical span at residues 236–258; sequence AFSICSSHLCVVGLFYGTAIIMY. Residues 259 to 271 are Extracellular-facing; sequence VEPQYESPKEQKK. Residues 272–291 traverse the membrane as a helical segment; it reads YLLLFHSLFNPMLNPLIYSL. The Cytoplasmic portion of the chain corresponds to 292–310; the sequence is RNKEVQGTLKRMLEKKRTS.

Belongs to the G-protein coupled receptor 1 family.

It is found in the cell membrane. Functionally, odorant receptor. This chain is Olfactory receptor 2A25 (OR2A25), found in Homo sapiens (Human).